The chain runs to 284 residues: tRNA uridine(34) hydroxylase (284 aa).

Residues 132-226 (AGRPVVMLDT…YFEEVGGAHY (95 aa)) form the Rhodanese domain. The active-site Cysteine persulfide intermediate is the C186.

Belongs to the TrhO family.

The catalysed reaction is uridine(34) in tRNA + AH2 + O2 = 5-hydroxyuridine(34) in tRNA + A + H2O. In terms of biological role, catalyzes oxygen-dependent 5-hydroxyuridine (ho5U) modification at position 34 in tRNAs. The protein is tRNA uridine(34) hydroxylase of Burkholderia cenocepacia (strain HI2424).